Consider the following 409-residue polypeptide: tRNA-specific 2-thiouridylase MnmA (409 aa).

ATP is bound by residues 40–47 (GLSGGVDS) and Leu-66. Cys-127 serves as the catalytic Nucleophile. Cys-127 and Cys-237 are oxidised to a cystine. An ATP-binding site is contributed by Gly-152. The tract at residues 156 to 179 (RIRHREDPEPQQALPGDSSGRHQL) is disordered. Residues 187–189 (KDQ) are interaction with tRNA. Catalysis depends on Cys-237, which acts as the Cysteine persulfide intermediate. Positions 342–343 (RY) are interaction with tRNA.

It belongs to the MnmA/TRMU family.

The protein localises to the cytoplasm. The catalysed reaction is S-sulfanyl-L-cysteinyl-[protein] + uridine(34) in tRNA + AH2 + ATP = 2-thiouridine(34) in tRNA + L-cysteinyl-[protein] + A + AMP + diphosphate + H(+). Catalyzes the 2-thiolation of uridine at the wobble position (U34) of tRNA, leading to the formation of s(2)U34. In Prochlorococcus marinus (strain MIT 9303), this protein is tRNA-specific 2-thiouridylase MnmA.